Here is a 905-residue protein sequence, read N- to C-terminus: Cadherin-2B (905 aa).

The first 28 residues, 1–28, serve as a signal peptide directing secretion; sequence MCRKQPFLLPTLLGILAALMLQQGPVEA. A propeptide spanning residues 29–160 is cleaved from the precursor; it reads FGGSRLCKTG…NSNGLQRQKR (132 aa). Cadherin domains lie at 161 to 268, 269 to 383, 384 to 498, 499 to 604, and 605 to 713; these read DWVI…RPEF, LHQI…PPEF, TAMT…NPYF, TPNP…DNAP, and YVYP…TTAP. Residues 161–723 are Extracellular-facing; sequence DWVIPPINVP…IIGTGLGTGA (563 aa). E171 provides a ligand contact to Ca(2+). N191 carries an N-linked (GlcNAc...) asparagine glycan. The Ca(2+) site is built by D227, E229, D260, M261, N262, D263, and N264. A glycan (N-linked (GlcNAc...) asparagine) is linked at N274. Ca(2+) contacts are provided by D294, D296, and N302. The N-linked (GlcNAc...) asparagine glycan is linked to N326. D354 is a Ca(2+) binding site. 5 N-linked (GlcNAc...) asparagine glycosylation sites follow: N403, N573, N623, N651, and N692. Residues 724–745 form a helical membrane-spanning segment; sequence IIAILLCIIILLTLVLMFVVWM. At 746–905 the chain is on the cytoplasmic side; that stretch reads KRRDKERQAK…LADMYGGSDD (160 aa). Disordered regions lie at residues 774 to 800 and 862 to 883; these read EEGG…PDTI and SGST…EQDY. Residues 775–784 show a composition bias toward acidic residues; the sequence is EGGGEEDQDY. The segment covering 862–879 has biased composition (low complexity); that stretch reads SGSTAGSLSSLNSSSSGG.

Homodimer (via extracellular region). Can also form heterodimers with other cadherins (via extracellular region). Dimerization occurs in trans, i.e. with a cadherin chain from another cell.

The protein localises to the cell membrane. The protein resides in the sarcolemma. Its subcellular location is the cell junction. It localises to the cell surface. It is found in the desmosome. The protein localises to the adherens junction. Calcium-dependent cell adhesion protein; preferentially mediates homotypic cell-cell adhesion. Cadherins may thus contribute to the sorting of heterogeneous cell types, and thereby play an important role during embryonic development. Required for proper neurite branching. Required for pre- and postsynaptic organization. This is Cadherin-2B (cdh2-b) from Xenopus laevis (African clawed frog).